Consider the following 530-residue polypeptide: Chaperone Ric-8A (530 aa).

Ser435 carries the post-translational modification Phosphoserine. Residues Thr440 and Thr442 each carry the phosphothreonine modification. Phosphoserine occurs at positions 501, 522, 523, and 527.

It belongs to the synembryn family. As to quaternary structure, interacts with GDP-bound G alpha proteins GNAI1, GNAO1 and GNAQ, and with GNA13 with lower affinity. Does not interact with G-alpha proteins when they are in complex with subunits beta and gamma. Interacts (via C-terminus) with RGS14; the interaction stimulates the dissociation of the complex between RGS14 and the active GTP-bound form of GNAI1. Interacts with NCS1; interaction is favored in the absence of Ca(2+) and myristoylation of NCS1 is not required. Phosphorylated at Ser-435 and Thr-440 by CK2, stabilizing its interface with G alpha proteins.

It localises to the cytoplasm. The protein localises to the cell cortex. Functionally, chaperone that specifically binds and folds nascent G alpha proteins prior to G protein heterotrimer formation, promoting their stability and activity: folds GNAI1, GNAO1, GNA13 and GNAQ. Does not fold G(s) G-alpha proteins GNAS nor GNAL. Also acts as a guanine nucleotide exchange factor (GEF) for G alpha proteins by stimulating exchange of bound GDP for free GTP. Involved in regulation of microtubule pulling forces during mitotic movement of chromosomes by stimulating G(i)-alpha protein (GNAI1), possibly leading to release G(i)-alpha-GTP and NuMA proteins from the NuMA-GPSM2-G(i)-alpha-GDP complex. Also acts as an activator for G(q)-alpha (GNAQ) protein by enhancing the G(q)-coupled receptor-mediated ERK activation. This Macaca fascicularis (Crab-eating macaque) protein is Chaperone Ric-8A (RIC8A).